The sequence spans 317 residues: Acetyl-coenzyme A carboxylase carboxyl transferase subunit alpha (317 aa).

In terms of domain architecture, CoA carboxyltransferase C-terminal spans 39-293 (RLKKKSISLT…KTSLAQGVAE (255 aa)).

Belongs to the AccA family. Acetyl-CoA carboxylase is a heterohexamer composed of biotin carboxyl carrier protein (AccB), biotin carboxylase (AccC) and two subunits each of ACCase subunit alpha (AccA) and ACCase subunit beta (AccD).

The protein localises to the cytoplasm. The enzyme catalyses N(6)-carboxybiotinyl-L-lysyl-[protein] + acetyl-CoA = N(6)-biotinyl-L-lysyl-[protein] + malonyl-CoA. It participates in lipid metabolism; malonyl-CoA biosynthesis; malonyl-CoA from acetyl-CoA: step 1/1. Its function is as follows. Component of the acetyl coenzyme A carboxylase (ACC) complex. First, biotin carboxylase catalyzes the carboxylation of biotin on its carrier protein (BCCP) and then the CO(2) group is transferred by the carboxyltransferase to acetyl-CoA to form malonyl-CoA. The protein is Acetyl-coenzyme A carboxylase carboxyl transferase subunit alpha of Marinobacter nauticus (strain ATCC 700491 / DSM 11845 / VT8) (Marinobacter aquaeolei).